Consider the following 170-residue polypeptide: Peptide deformylase (170 aa).

Positions 94 and 136 each coordinate Fe cation. Residue Glu-137 is part of the active site. Residue His-140 participates in Fe cation binding.

Belongs to the polypeptide deformylase family. It depends on Fe(2+) as a cofactor.

It catalyses the reaction N-terminal N-formyl-L-methionyl-[peptide] + H2O = N-terminal L-methionyl-[peptide] + formate. In terms of biological role, removes the formyl group from the N-terminal Met of newly synthesized proteins. Requires at least a dipeptide for an efficient rate of reaction. N-terminal L-methionine is a prerequisite for activity but the enzyme has broad specificity at other positions. The sequence is that of Peptide deformylase from Xylella fastidiosa (strain 9a5c).